We begin with the raw amino-acid sequence, 547 residues long: Chaperonin GroEL 1 (547 aa).

ATP contacts are provided by residues 30–33 (TLGP), Lys51, 87–91 (DGTTT), Gly415, and Asp496.

This sequence belongs to the chaperonin (HSP60) family. As to quaternary structure, forms a cylinder of 14 subunits composed of two heptameric rings stacked back-to-back. Interacts with the co-chaperonin GroES.

The protein resides in the cytoplasm. The enzyme catalyses ATP + H2O + a folded polypeptide = ADP + phosphate + an unfolded polypeptide.. Together with its co-chaperonin GroES, plays an essential role in assisting protein folding. The GroEL-GroES system forms a nano-cage that allows encapsulation of the non-native substrate proteins and provides a physical environment optimized to promote and accelerate protein folding. The sequence is that of Chaperonin GroEL 1 from Rhodopseudomonas palustris (strain BisB18).